The sequence spans 150 residues: Large ribosomal subunit protein bL9 (150 aa).

This sequence belongs to the bacterial ribosomal protein bL9 family.

Its function is as follows. Binds to the 23S rRNA. This is Large ribosomal subunit protein bL9 from Alcanivorax borkumensis (strain ATCC 700651 / DSM 11573 / NCIMB 13689 / SK2).